The sequence spans 174 residues: RNA pyrophosphohydrolase (174 aa).

Residues 6–149 enclose the Nudix hydrolase domain; that stretch reads GFRANVGIII…KRDVYRKVMK (144 aa). The short motif at 38-59 is the Nudix box element; that stretch reads GGVDDGESAEEAMYRELYEEVG.

It belongs to the Nudix hydrolase family. RppH subfamily. Requires a divalent metal cation as cofactor.

In terms of biological role, accelerates the degradation of transcripts by removing pyrophosphate from the 5'-end of triphosphorylated RNA, leading to a more labile monophosphorylated state that can stimulate subsequent ribonuclease cleavage. In Shewanella sp. (strain W3-18-1), this protein is RNA pyrophosphohydrolase.